We begin with the raw amino-acid sequence, 250 residues long: AA9 family lytic polysaccharide monooxygenase B (250 aa).

An N-terminal signal peptide occupies residues 1 to 21 (MTLSKITSIAGLLASASLVAG). Cu(2+)-binding residues include histidine 22 and histidine 107. At histidine 22 the chain carries Methylhistidine. 2 cysteine pairs are disulfide-bonded: cysteine 77–cysteine 199 and cysteine 118–cysteine 122. Asparagine 159 carries N-linked (GlcNAc...) asparagine glycosylation. O2 is bound by residues histidine 185 and glutamine 194. Tyrosine 196 is a Cu(2+) binding site.

This sequence belongs to the polysaccharide monooxygenase AA9 family. Cu(2+) serves as cofactor. Post-translationally, the catalytically essential N-terminal histidine His-22 is post-translationally modified by methylation to prevent protonation of the histidine side chain, and protect the critical active site of the enzyme from oxidative damage.

The protein resides in the secreted. It catalyses the reaction [(1-&gt;4)-beta-D-glucosyl]n+m + reduced acceptor + O2 = 4-dehydro-beta-D-glucosyl-[(1-&gt;4)-beta-D-glucosyl]n-1 + [(1-&gt;4)-beta-D-glucosyl]m + acceptor + H2O.. Its function is as follows. Lytic polysaccharide monooxygenase (LPMO) that depolymerizes crystalline and amorphous polysaccharides via the oxidation of scissile alpha- or beta-(1-4)-glycosidic bonds, yielding C1 and C4 oxidation products. Catalysis by LPMOs requires the reduction of the active-site copper from Cu(II) to Cu(I) by a reducing agent and H(2)O(2) or O(2) as a cosubstrate. Shows activity on phosphoric acid swollen cellulose, on NaOH pretreated soy spent flakes as well as on crystalline cellulose (Avicel). Does not have a positive effect on cel6A activity, but acts synergistically with endoglucanase egl7. The chain is AA9 family lytic polysaccharide monooxygenase B from Aspergillus fumigatus (strain ATCC MYA-4609 / CBS 101355 / FGSC A1100 / Af293) (Neosartorya fumigata).